A 459-amino-acid polypeptide reads, in one-letter code: Putrescine aminotransferase (459 aa).

Pyridoxal 5'-phosphate contacts are provided by residues 150 to 151 and Gln274; that span reads GT. Lys300 bears the N6-(pyridoxal phosphate)lysine mark. A pyridoxal 5'-phosphate-binding site is contributed by Thr332.

It belongs to the class-III pyridoxal-phosphate-dependent aminotransferase family. Putrescine aminotransferase subfamily. Pyridoxal 5'-phosphate is required as a cofactor.

The catalysed reaction is an alkane-alpha,omega-diamine + 2-oxoglutarate = an omega-aminoaldehyde + L-glutamate. The enzyme catalyses putrescine + 2-oxoglutarate = 1-pyrroline + L-glutamate + H2O. It carries out the reaction cadaverine + 2-oxoglutarate = 5-aminopentanal + L-glutamate. Its pathway is amine and polyamine degradation; putrescine degradation; 4-aminobutanal from putrescine (transaminase route): step 1/1. Its function is as follows. Catalyzes the aminotransferase reaction from putrescine to 2-oxoglutarate, leading to glutamate and 4-aminobutanal, which spontaneously cyclizes to form 1-pyrroline. This is the first step in one of two pathways for putrescine degradation, where putrescine is converted into 4-aminobutanoate (gamma-aminobutyrate or GABA) via 4-aminobutanal. Also functions as a cadaverine transaminase in a a L-lysine degradation pathway to succinate that proceeds via cadaverine, glutarate and L-2-hydroxyglutarate. In Escherichia coli O6:H1 (strain CFT073 / ATCC 700928 / UPEC), this protein is Putrescine aminotransferase.